Here is a 398-residue protein sequence, read N- to C-terminus: Tryptophan synthase beta chain (398 aa).

The residue at position 88 (lysine 88) is an N6-(pyridoxal phosphate)lysine.

It belongs to the TrpB family. As to quaternary structure, tetramer of two alpha and two beta chains. The cofactor is pyridoxal 5'-phosphate.

It catalyses the reaction (1S,2R)-1-C-(indol-3-yl)glycerol 3-phosphate + L-serine = D-glyceraldehyde 3-phosphate + L-tryptophan + H2O. Its pathway is amino-acid biosynthesis; L-tryptophan biosynthesis; L-tryptophan from chorismate: step 5/5. In terms of biological role, the beta subunit is responsible for the synthesis of L-tryptophan from indole and L-serine. In Mannheimia succiniciproducens (strain KCTC 0769BP / MBEL55E), this protein is Tryptophan synthase beta chain.